The sequence spans 81 residues: MAHSVKVYDTCIGCTQCVRACPCDVLEMVPRDGCKAGQIASAPRTEDCIGCKRCETACPTDFLSVRVYLGGETTRSMGLTY.

2 4Fe-4S ferredoxin-type domains span residues 2–31 (AHSV…MVPR) and 39–68 (IASA…VRVY). Cys11, Cys14, Cys17, Cys21, Cys48, Cys51, Cys54, and Cys58 together coordinate [4Fe-4S] cluster.

The eukaryotic PSI reaction center is composed of at least 11 subunits. It depends on [4Fe-4S] cluster as a cofactor.

The protein localises to the plastid. It localises to the chloroplast thylakoid membrane. It carries out the reaction reduced [plastocyanin] + hnu + oxidized [2Fe-2S]-[ferredoxin] = oxidized [plastocyanin] + reduced [2Fe-2S]-[ferredoxin]. Its function is as follows. Apoprotein for the two 4Fe-4S centers FA and FB of photosystem I (PSI); essential for photochemical activity. FB is the terminal electron acceptor of PSI, donating electrons to ferredoxin. The C-terminus interacts with PsaA/B/D and helps assemble the protein into the PSI complex. Required for binding of PsaD and PsaE to PSI. PSI is a plastocyanin/cytochrome c6-ferredoxin oxidoreductase, converting photonic excitation into a charge separation, which transfers an electron from the donor P700 chlorophyll pair to the spectroscopically characterized acceptors A0, A1, FX, FA and FB in turn. This is Photosystem I iron-sulfur center from Antithamnion sp. (Red alga).